The primary structure comprises 271 residues: Formamidopyrimidine-DNA glycosylase (271 aa).

The active-site Schiff-base intermediate with DNA is proline 2. The active-site Proton donor is glutamate 3. Lysine 58 acts as the Proton donor; for beta-elimination activity in catalysis. DNA is bound by residues histidine 90, arginine 108, and arginine 151. The FPG-type; degenerate zinc finger occupies 236–271; the sequence is QVYGRDGQPCHRDDGGTIRRFAQGGRSTWYCPRCQR. Residue arginine 261 is the Proton donor; for delta-elimination activity of the active site.

Belongs to the FPG family. As to quaternary structure, monomer. Zn(2+) serves as cofactor.

The catalysed reaction is Hydrolysis of DNA containing ring-opened 7-methylguanine residues, releasing 2,6-diamino-4-hydroxy-5-(N-methyl)formamidopyrimidine.. It catalyses the reaction 2'-deoxyribonucleotide-(2'-deoxyribose 5'-phosphate)-2'-deoxyribonucleotide-DNA = a 3'-end 2'-deoxyribonucleotide-(2,3-dehydro-2,3-deoxyribose 5'-phosphate)-DNA + a 5'-end 5'-phospho-2'-deoxyribonucleoside-DNA + H(+). Functionally, involved in base excision repair of DNA damaged by oxidation or by mutagenic agents. Acts as a DNA glycosylase that recognizes and removes damaged bases. Has a preference for oxidized purines, such as 7,8-dihydro-8-oxoguanine (8-oxoG). Has AP (apurinic/apyrimidinic) lyase activity and introduces nicks in the DNA strand. Cleaves the DNA backbone by beta-delta elimination to generate a single-strand break at the site of the removed base with both 3'- and 5'-phosphates. In Erythrobacter litoralis (strain HTCC2594), this protein is Formamidopyrimidine-DNA glycosylase.